The primary structure comprises 113 residues: Hydrogenase maturation factor HypA (113 aa).

Histidine 2 is a binding site for Ni(2+). Positions 73, 76, 89, and 92 each coordinate Zn(2+).

Belongs to the HypA/HybF family.

In terms of biological role, involved in the maturation of [NiFe] hydrogenases. Required for nickel insertion into the metal center of the hydrogenase. The protein is Hydrogenase maturation factor HypA of Actinobacillus succinogenes (strain ATCC 55618 / DSM 22257 / CCUG 43843 / 130Z).